The following is a 304-amino-acid chain: CBY1-interacting BAR domain-containing protein 2 (304 aa).

The BAR-like stretch occupies residues 6–217 (SRDSQVRVME…EKYDLERDLL (212 aa)).

This sequence belongs to the CIBAR family. Homodimer (via BAR-like domain). Heterodimer (via BAR-like domain) with FAM92A. Interacts with CBY1. Restricted to certain tissues, most prominently expressed in multicilaited tissues.

The protein resides in the cytoplasm. Its subcellular location is the cytoskeleton. The protein localises to the microtubule organizing center. It is found in the centrosome. It localises to the centriole. The protein resides in the cilium basal body. May play a role in ciliogenesis. In cooperation with CBY1 may facilitate ciliogenesis likely by the recruitment and fusion of endosomal vesicles at distal appendages during early stages of ciliogenesis. This is CBY1-interacting BAR domain-containing protein 2 from Homo sapiens (Human).